The following is a 125-amino-acid chain: Protein ApaG (125 aa).

The ApaG domain occupies 1–125; that stretch reads MINAPRVCVQ…FRLAIPSLIH (125 aa).

This chain is Protein ApaG, found in Pectobacterium atrosepticum (strain SCRI 1043 / ATCC BAA-672) (Erwinia carotovora subsp. atroseptica).